Here is a 146-residue protein sequence, read N- to C-terminus: MLILDRILGQASDPALADRLHDLSHAGQVETLSLSGSDIQRHRLRLASDRGTDCAIRLERHQQLRNGSVLMLDSQRAIVVQMQDQQYLDLQPRDAAAALELGYFAGNMHWAVRFAGDTLQILLNGPEADYLERLAPMLADGRVQRA.

Belongs to the UreE family.

It localises to the cytoplasm. Involved in urease metallocenter assembly. Binds nickel. Probably functions as a nickel donor during metallocenter assembly. The chain is Urease accessory protein UreE 1 from Pseudomonas syringae pv. syringae (strain B728a).